The sequence spans 390 residues: MTTLEAIKFDRTNVTLQILDQLLIPYSTEYLNIEGVDDAYDAIKSMQVRGAPAIAIVGSFAIVVEIKNRHISSIDELAAKIDYLESSRPTAVNLSNACNEIRALLGNSESLDEVYKRVFDFAVALYDDDLSNNHKIGSNGVDYLVESLRSQNFEGPFSIITYCNTGSLATSGHGTALGIVRSAYKALSKENSKEKFWLEQIYPCETRPYNQGAKLTTFELKYEKIPFTLICDNMVTSLISRTHNKKQVKDIVAPVKFAIVGADRIVQNGDTANKIGTFQLAAIFDSFNRRNTGPRDSLKMIVAAPRTTIDLKTTTGDDIIIEERPANELTTLKGPILRKDVAGEKQIVGVATPGIQVWNPAFDVTPHELIDSIVTEEKVYAKDKEGNYHL.

Residue Asp-263 is the Proton donor of the active site.

This sequence belongs to the eIF-2B alpha/beta/delta subunits family. MtnA subfamily.

It is found in the cytoplasm. Its subcellular location is the nucleus. The catalysed reaction is 5-(methylsulfanyl)-alpha-D-ribose 1-phosphate = 5-(methylsulfanyl)-D-ribulose 1-phosphate. The protein operates within amino-acid biosynthesis; L-methionine biosynthesis via salvage pathway; L-methionine from S-methyl-5-thio-alpha-D-ribose 1-phosphate: step 1/6. Catalyzes the interconversion of methylthioribose-1-phosphate (MTR-1-P) into methylthioribulose-1-phosphate (MTRu-1-P). This is Methylthioribose-1-phosphate isomerase from Meyerozyma guilliermondii (strain ATCC 6260 / CBS 566 / DSM 6381 / JCM 1539 / NBRC 10279 / NRRL Y-324) (Yeast).